The primary structure comprises 799 residues: Phospholipase A-2-activating protein (799 aa).

WD repeat units lie at residues 21 to 62 (GHEL…RGFI), 69 to 113 (GHSN…PLYT), 116 to 154 (GHKN…MTLQ), 155 to 194 (GHTA…MTFL), 196 to 233 (HEDC…LQIY), 235 to 274 (GHTN…QTIR), and 276 to 314 (PAQS…ASIE). Residues 372–471 (QWSTGEGRWM…AGQTPSTNLG (100 aa)) form the PFU domain. The region spanning 537–798 (AYFPKTKPVT…NECCRLLLNM (262 aa)) is the PUL domain. ARM repeat units follow at residues 550–592 (ANPS…NPSG), 593–624 (GTVT…LRIS), 625–673 (IKNP…SFFC), 674–719 (DPGS…CLHK), 720–759 (VSDI…LISG), and 760–799 (DTNA…LNML).

It belongs to the WD repeat PLAP family.

It localises to the nucleus. Its subcellular location is the cytoplasm. The protein localises to the synapse. In terms of biological role, plays a role in protein ubiquitination, sorting and degradation through its association with VCP. Involved in ubiquitin-mediated membrane proteins trafficking to late endosomes in an ESCRT-dependent manner, and hence plays a role in synaptic vesicle recycling. May play a role in macroautophagy, regulating for instance the clearance of damaged lysosomes. Plays a role in cerebellar Purkinje cell development. Positively regulates cytosolic and calcium-independent phospholipase A2 activities in a tumor necrosis factor alpha (TNF-alpha)- or lipopolysaccharide (LPS)-dependent manner, and hence prostaglandin E2 biosynthesis. This Xenopus laevis (African clawed frog) protein is Phospholipase A-2-activating protein (plaa).